The chain runs to 138 residues: MRALWIVAVLLVGVEGNLLQFNKMIKFETNKNAIPFYAFYGCYCGWGGRGRPKDATDRCCFVHDCCYGKLPNCDTKWDIYSYSLKSGFITCGKGTWCEEQICECDRVAAECLRRSLSTYKYGYMFYLDSRCKGPSEQC.

The first 16 residues, 1–16 (MRALWIVAVLLVGVEG), serve as a signal peptide directing secretion. Intrachain disulfides connect Cys-42–Cys-131, Cys-44–Cys-60, Cys-59–Cys-111, Cys-65–Cys-138, Cys-66–Cys-104, Cys-73–Cys-97, and Cys-91–Cys-102. The Ca(2+) site is built by Tyr-43, Gly-45, and Gly-47. His-63 is a catalytic residue. Asp-64 provides a ligand contact to Ca(2+). Residue Asp-105 is part of the active site.

In terms of assembly, heterodimer of an acidic subunit and a basic chain. The acidic subunit is non-toxic, without enzymatic activity and comprises 3 peptides that are cross-linked by 7 disulfide bridges. The basic subunit is toxic, has phospholipase A2 activity and is composed of a single chain. It depends on Ca(2+) as a cofactor. In terms of tissue distribution, expressed by the venom gland.

It localises to the secreted. It catalyses the reaction a 1,2-diacyl-sn-glycero-3-phosphocholine + H2O = a 1-acyl-sn-glycero-3-phosphocholine + a fatty acid + H(+). Snake venom phospholipase A2 (PLA2) that shows presynaptic neurotoxicity. PLA2 catalyzes the calcium-dependent hydrolysis of the 2-acyl groups in 3-sn-phosphoglycerides. The protein is Basic phospholipase A2 sistruxin B of Sistrurus tergeminus (Western massasauga).